The sequence spans 894 residues: DNA mismatch repair protein MutS (894 aa).

ATP is bound at residue 632–639; sequence GPNMGGKS.

This sequence belongs to the DNA mismatch repair MutS family.

Functionally, this protein is involved in the repair of mismatches in DNA. It is possible that it carries out the mismatch recognition step. This protein has a weak ATPase activity. This Paraburkholderia phytofirmans (strain DSM 17436 / LMG 22146 / PsJN) (Burkholderia phytofirmans) protein is DNA mismatch repair protein MutS.